The primary structure comprises 356 residues: Decorin (356 aa).

Residues 1–15 form the signal peptide; the sequence is MRLVLFILLLPVCLA. The propeptide occupies 16 to 29; the sequence is TPFHQKGLFDFMLE. O-linked (Xyl...) (glycosaminoglycan) serine glycosylation is present at Ser-45. 2 disulfides stabilise this stretch: Cys-51-Cys-57 and Cys-55-Cys-64. 12 LRR repeats span residues 70–90, 91–114, 115–138, 139–159, 160–183, 184–209, 210–230, 231–254, 255–278, 279–301, 302–331, and 332–356; these read ERVP…NNKI, TEIR…NNKI, SKIS…KNNL, KELP…ENEI, SKLR…TNPL, KSSG…DTNI, TSIP…GNKI, SKID…FNSI, SSVE…NNEL, VRVP…NNKI, ASIG…SNPV, and QYWE…GNYK. Asn-208 carries an N-linked (GlcNAc...) asparagine glycan. Asn-259 is a glycosylation site (N-linked (GlcNAc...) asparagine). Cys-310 and Cys-343 are joined by a disulfide.

The protein belongs to the small leucine-rich proteoglycan (SLRP) family. SLRP class I subfamily. In terms of assembly, binds to type I and type II collagen, to fibronectin and TGF-beta. Forms a ternary complex with MFAP2 and ELN. Post-translationally, the attached glycosaminoglycan chain can be either chondroitin sulfate or dermatan sulfate depending upon the tissue of origin.

It localises to the secreted. Its subcellular location is the extracellular space. It is found in the extracellular matrix. Functionally, may affect the rate of fibrils formation. This chain is Decorin (DCN), found in Coturnix japonica (Japanese quail).